The sequence spans 696 residues: UvrABC system protein C (696 aa).

Residues 16–95 form the GIY-YIG domain; sequence TEPGVYKFRD…IKRFDPRFNV (80 aa). The UVR domain maps to 208-243; sequence DKVTRKLNADMMAAAEELDFERAARLRDDLEAIDKV.

It belongs to the UvrC family. As to quaternary structure, interacts with UvrB in an incision complex.

Its subcellular location is the cytoplasm. In terms of biological role, the UvrABC repair system catalyzes the recognition and processing of DNA lesions. UvrC both incises the 5' and 3' sides of the lesion. The N-terminal half is responsible for the 3' incision and the C-terminal half is responsible for the 5' incision. The sequence is that of UvrABC system protein C from Corynebacterium glutamicum (strain R).